The chain runs to 637 residues: ATP-dependent zinc metalloprotease FtsH (637 aa).

The Cytoplasmic portion of the chain corresponds to 1 to 6 (MNNQGR). A helical membrane pass occupies residues 7–27 (SILAWAALFIFVILLFNVFQS). The Periplasmic segment spans residues 28-103 (DGLLGVRNNI…VVPLETRMNT (76 aa)). A helical membrane pass occupies residues 104–124 (FLGFLISWFPMLLLIGVWVFF). The Cytoplasmic segment spans residues 125–637 (MRQMHGGGKA…TKAQKENIAS (513 aa)). ATP is bound at residue 195-202 (GPPGTGKT). Residue His417 participates in Zn(2+) binding. Glu418 is an active-site residue. Residues His421 and Asp495 each contribute to the Zn(2+) site. The segment at 617–637 (DKEKLHEKTKTTKAQKENIAS) is disordered.

It in the central section; belongs to the AAA ATPase family. In the C-terminal section; belongs to the peptidase M41 family. Homohexamer. Zn(2+) serves as cofactor.

The protein localises to the cell inner membrane. Acts as a processive, ATP-dependent zinc metallopeptidase for both cytoplasmic and membrane proteins. Plays a role in the quality control of integral membrane proteins. This is ATP-dependent zinc metalloprotease FtsH from Rickettsia typhi (strain ATCC VR-144 / Wilmington).